Consider the following 421-residue polypeptide: Mannose-1-phosphate guanylyltransferase regulatory subunit alpha (421 aa).

Residues 2–252 (LKAVILIGGP…EGCWSQIKSA (251 aa)) are substrate-binding domain. Residues E85 and Q248 each contribute to the GDP-alpha-D-mannose site. Residues 274-421 (LASTKEGGPT…SRSFKNQIIL (148 aa)) form a hexapeptide repeat domain region. Positions 357–385 (TPSDPNPNDPYSKIDSETLFREGKLTPSI) are C-loop.

This sequence belongs to the transferase hexapeptide repeat family. Component of the GMPPA-GMPPB mannose-1-phosphate guanylyltransferase complex composed of 4 gmppa subunits and 8 gmppb subunits; the complex is organized into three layers, a central layer made up of 2 gmppa dimers sandwiched between two layers each made up of 2 gmppb dimers.

It localises to the cytoplasm. Its function is as follows. Regulatory subunit of the GMPPA-GMPPB mannose-1-phosphate guanylyltransferase complex; reduces the catalytic activity of GMPPB when part of the complex. Mediates allosteric feedback inhibition of GMPPB catalytic activity upon binding GDP-alpha-D-mannose. Together with GMPPB regulates GDP-alpha-D-mannose levels. This chain is Mannose-1-phosphate guanylyltransferase regulatory subunit alpha (gmppa), found in Xenopus tropicalis (Western clawed frog).